A 163-amino-acid polypeptide reads, in one-letter code: uncharacterized protein (163 aa).

Basic and acidic residues predominate over residues 1–10 (MTHPLPHDSH). 2 disordered regions span residues 1-21 (MTHP…VNKS) and 71-112 (SKQP…EQRR). Over residues 90–105 (PASSLQDHSRLTSLSR) the composition is skewed to polar residues.

This is an uncharacterized protein from Homo sapiens (Human).